The sequence spans 283 residues: 4-hydroxy-3-methylbut-2-enyl diphosphate reductase (283 aa).

Residue Cys12 coordinates [4Fe-4S] cluster. Positions 40 and 73 each coordinate (2E)-4-hydroxy-3-methylbut-2-enyl diphosphate. Dimethylallyl diphosphate is bound by residues His40 and His73. Residues His40 and His73 each contribute to the isopentenyl diphosphate site. Residue Cys95 participates in [4Fe-4S] cluster binding. Residue His123 coordinates (2E)-4-hydroxy-3-methylbut-2-enyl diphosphate. Position 123 (His123) interacts with dimethylallyl diphosphate. His123 provides a ligand contact to isopentenyl diphosphate. The Proton donor role is filled by Glu125. (2E)-4-hydroxy-3-methylbut-2-enyl diphosphate is bound at residue Thr161. Residue Cys189 participates in [4Fe-4S] cluster binding. The (2E)-4-hydroxy-3-methylbut-2-enyl diphosphate site is built by Ser217, Asn219, and Ser261. Dimethylallyl diphosphate-binding residues include Ser217, Asn219, and Ser261. Isopentenyl diphosphate is bound by residues Ser217, Asn219, and Ser261.

It belongs to the IspH family. [4Fe-4S] cluster serves as cofactor.

It carries out the reaction isopentenyl diphosphate + 2 oxidized [2Fe-2S]-[ferredoxin] + H2O = (2E)-4-hydroxy-3-methylbut-2-enyl diphosphate + 2 reduced [2Fe-2S]-[ferredoxin] + 2 H(+). The catalysed reaction is dimethylallyl diphosphate + 2 oxidized [2Fe-2S]-[ferredoxin] + H2O = (2E)-4-hydroxy-3-methylbut-2-enyl diphosphate + 2 reduced [2Fe-2S]-[ferredoxin] + 2 H(+). The protein operates within isoprenoid biosynthesis; dimethylallyl diphosphate biosynthesis; dimethylallyl diphosphate from (2E)-4-hydroxy-3-methylbutenyl diphosphate: step 1/1. Its pathway is isoprenoid biosynthesis; isopentenyl diphosphate biosynthesis via DXP pathway; isopentenyl diphosphate from 1-deoxy-D-xylulose 5-phosphate: step 6/6. Its function is as follows. Catalyzes the conversion of 1-hydroxy-2-methyl-2-(E)-butenyl 4-diphosphate (HMBPP) into a mixture of isopentenyl diphosphate (IPP) and dimethylallyl diphosphate (DMAPP). Acts in the terminal step of the DOXP/MEP pathway for isoprenoid precursor biosynthesis. The protein is 4-hydroxy-3-methylbut-2-enyl diphosphate reductase of Citrifermentans bemidjiense (strain ATCC BAA-1014 / DSM 16622 / JCM 12645 / Bem) (Geobacter bemidjiensis).